We begin with the raw amino-acid sequence, 150 residues long: 3-hydroxyacyl-[acyl-carrier-protein] dehydratase FabZ (150 aa).

Residue His-54 is part of the active site.

It belongs to the thioester dehydratase family. FabZ subfamily.

The protein localises to the cytoplasm. It carries out the reaction a (3R)-hydroxyacyl-[ACP] = a (2E)-enoyl-[ACP] + H2O. Its function is as follows. Involved in unsaturated fatty acids biosynthesis. Catalyzes the dehydration of short chain beta-hydroxyacyl-ACPs and long chain saturated and unsaturated beta-hydroxyacyl-ACPs. In Vibrio atlanticus (strain LGP32) (Vibrio splendidus (strain Mel32)), this protein is 3-hydroxyacyl-[acyl-carrier-protein] dehydratase FabZ.